Consider the following 484-residue polypeptide: Aldehyde dehydrogenase family 3 member A2 (484 aa).

Residues 1-463 lie on the Cytoplasmic side of the membrane; sequence MERQVQRLRQ…FLLKQFNKGR (463 aa). Residue 185–190 coordinates NAD(+); the sequence is GNTAVG. Residues glutamate 207 and cysteine 241 contribute to the active site. Phosphoserine is present on serine 293. Residues 464–484 form a helical membrane-spanning segment; that stretch reads LQLLLLVCLVAVAAVIVKDQL. Residues 481-484 carry the Prevents secretion from ER motif; that stretch reads KDQL.

Belongs to the aldehyde dehydrogenase family. In terms of assembly, homodimer. The N-terminus is blocked.

The protein localises to the microsome membrane. It is found in the endoplasmic reticulum membrane. The enzyme catalyses an aldehyde + NAD(+) + H2O = a carboxylate + NADH + 2 H(+). It carries out the reaction a fatty aldehyde + NAD(+) + H2O = a fatty acid + NADH + 2 H(+). It catalyses the reaction (2E)-hexadecenal + NAD(+) + H2O = (E)-hexadec-2-enoate + NADH + 2 H(+). The catalysed reaction is hexadecanoate + NADH + 2 H(+) = hexadecanal + NAD(+) + H2O. The enzyme catalyses 22-oxodocosanoate + NAD(+) + H2O = docosanedioate + NADH + 2 H(+). It carries out the reaction 2,6,10,14-tetramethylpentadecanal + NAD(+) + H2O = 2,6,10,14-tetramethylpentadecanoate + NADH + 2 H(+). It catalyses the reaction octadecanal + NAD(+) + H2O = octadecanoate + NADH + 2 H(+). The catalysed reaction is dodecanoate + NADH + 2 H(+) = dodecanal + NAD(+) + H2O. The enzyme catalyses decanal + NAD(+) + H2O = decanoate + NADH + 2 H(+). It carries out the reaction tetradecanal + NAD(+) + H2O = tetradecanoate + NADH + 2 H(+). It catalyses the reaction octanal + NAD(+) + H2O = octanoate + NADH + 2 H(+). The catalysed reaction is heptanal + NAD(+) + H2O = heptanoate + NADH + 2 H(+). The enzyme catalyses (2E,6E)-farnesal + NAD(+) + H2O = (2E,6E)-farnesoate + NADH + 2 H(+). In terms of biological role, catalyzes the oxidation of medium and long-chain aliphatic aldehydes to fatty acids. Active on a variety of saturated and unsaturated aliphatic aldehydes between 6 and 24 carbons in length. Responsible for conversion of the sphingosine 1-phosphate (S1P) degradation product hexadecenal to hexadecenoic acid. The polypeptide is Aldehyde dehydrogenase family 3 member A2 (Aldh3a2) (Rattus norvegicus (Rat)).